Consider the following 66-residue polypeptide: Photosystem II reaction center protein J (66 aa).

A helical membrane pass occupies residues 36–56; the sequence is LWLVATAGGIAVIFVLGIFFY.

This sequence belongs to the PsbJ family. PSII is composed of 1 copy each of membrane proteins PsbA, PsbB, PsbC, PsbD, PsbE, PsbF, PsbH, PsbI, PsbJ, PsbK, PsbL, PsbM, PsbT, PsbX, PsbY, Psb30/Ycf12, peripheral proteins PsbO, CyanoQ (PsbQ), PsbU, PsbV and a large number of cofactors. It forms dimeric complexes.

The protein localises to the cellular thylakoid membrane. Functionally, one of the components of the core complex of photosystem II (PSII). PSII is a light-driven water:plastoquinone oxidoreductase that uses light energy to abstract electrons from H(2)O, generating O(2) and a proton gradient subsequently used for ATP formation. It consists of a core antenna complex that captures photons, and an electron transfer chain that converts photonic excitation into a charge separation. In Prochlorococcus marinus (strain MIT 9215), this protein is Photosystem II reaction center protein J.